The chain runs to 338 residues: m7GpppX diphosphatase (338 aa).

The disordered stretch occupies residues 1–36; sequence MADTAPQLKRKREQEAEEAETPSTEEKEAGVGNGTS. N-acetylalanine is present on A2. A nuclear localization signal (NLS) motif is present at residues 9–12; that stretch reads KRKR. S23 and S100 each carry phosphoserine. N6-acetyllysine is present on residues K137 and K141. The nuclear export sequence (NES) signature appears at 141-153; that stretch reads KYMRQDLRLIRET. Residues W174, E184, D204, K206, and 267–278 contribute to the substrate site; that span reads HYLPSYYHLHVH. The short motif at 274 to 278 is the Histidine triad motif element; sequence HLHVH. The active-site Nucleophile is H276.

It belongs to the HIT family. In terms of assembly, homodimer. Associates with components of the exosome multienzyme ribonuclease complex, such as EXOSC3 and EXOSC4. Interacts with NDOR1.

Its subcellular location is the cytoplasm. The protein localises to the nucleus. The catalysed reaction is a 5'-end (N(7)-methyl 5'-triphosphoguanosine)-ribonucleoside in mRNA + H2O = N(7)-methyl-GMP + a 5'-end diphospho-ribonucleoside in mRNA + 2 H(+). Its activity is regulated as follows. The hydrolytic product 7-methylguanosine diphosphate (m7GDP) efficiently inhibits the decapping scavenger activity and acts as a competitive inhibitor in vitro. Inhibited by 2,4-diaminoquinazoline. Decapping scavenger enzyme that catalyzes the cleavage of a residual cap structure following the degradation of mRNAs by the 3'-&gt;5' exosome-mediated mRNA decay pathway. Hydrolyzes cap analog structures like 7-methylguanosine nucleoside triphosphate (m7GpppG) with up to 10 nucleotide substrates (small capped oligoribonucleotides) and specifically releases 5'-phosphorylated RNA fragments and 7-methylguanosine monophosphate (m7GMP). Cleaves cap analog structures like tri-methyl guanosine nucleoside triphosphate (m3(2,2,7)GpppG) with very poor efficiency. Does not hydrolyze unmethylated cap analog (GpppG) and shows no decapping activity on intact m7GpppG-capped mRNA molecules longer than 25 nucleotides. Does not hydrolyze 7-methylguanosine diphosphate (m7GDP) to m7GMP. May also play a role in the 5'-&gt;3 mRNA decay pathway; m7GDP, the downstream product released by the 5'-&gt;3' mRNA mediated decapping activity, may be also converted by DCPS to m7GMP. Binds to m7GpppG and strongly to m7GDP. Plays a role in first intron splicing of pre-mRNAs. Inhibits activation-induced cell death. The chain is m7GpppX diphosphatase (Dcps) from Mus musculus (Mouse).